A 258-amino-acid polypeptide reads, in one-letter code: Indole-3-glycerol phosphate synthase (258 aa).

It belongs to the TrpC family.

It catalyses the reaction 1-(2-carboxyphenylamino)-1-deoxy-D-ribulose 5-phosphate + H(+) = (1S,2R)-1-C-(indol-3-yl)glycerol 3-phosphate + CO2 + H2O. Its pathway is amino-acid biosynthesis; L-tryptophan biosynthesis; L-tryptophan from chorismate: step 4/5. The protein is Indole-3-glycerol phosphate synthase of Geobacillus kaustophilus (strain HTA426).